The following is a 2474-amino-acid chain: Serine/threonine-protein kinase TOR2 (2474 aa).

The segment at 1-62 (MNKYINKYTT…NGPNDSGRVI (62 aa)) is disordered. Threonine 10 is subject to Phosphothreonine. Basic residues predominate over residues 25-36 (HRTRKKLTHKSH). The span at 43–56 (STTSNTDSNHNGPN) shows a compositional bias: polar residues. 11 HEAT repeats span residues 588–626 (YSLTEFVRLITISYIEHEDSSVRKLAALTSCDLFIKDDI), 636–674 (HSVSEVLSKLLMIAITDPVAEIRLEILQHLGSNFDPQLA), 676–710 (PDNLRLLFMALNDEIFGIQLEAIKIIGRLSSVNPA), 756–793 (PYIDPILDVILPKCQDASSAVASTALKVLGELSVVGGK), 797–835 (RYLKELMPLIINTFQDQSNSFKRDAALTTLGQLAASSGY), 841–879 (LDYPELLGILINILKTENNPHIRRGTVRLIGILGALDPY), 917–955 (YYPTVVIHNLMKILNDPSLSIHHTAAIQAIMHIFQNLGL), 1039–1076 (RFVPETLTFFLDILENDQSNKRIVPIRILKSLVTFGPN), 1079–1116 (DYSHLIMPIVVRMTEYSAGSLKKISIITLGRLAKNINL), 1118–1155 (EMSSRIVQALVRILNNGDRELTKATMNTLSLLLLQLGT), and 1292–1331 (SYQEDLIQALCKALSSSENPPEIYQMLLNLVEFMEHDDKP). The FAT domain maps to 1338–1922 (TLGKYAQKCH…VYPLMVAIKS (585 aa)). The PI3K/PI4K catalytic domain occupies 2097-2421 (FEPVFSVISS…EHKNAIRNAR (325 aa)). Positions 2103–2109 (VISSKQR) are G-loop. Positions 2276–2284 (GLGDRHPSN) are catalytic loop. The segment at 2296–2321 (HIDFGDCFEAAILREKFPEKVPFRLT) is activation loop. Residues 2442–2474 (NDLDVPEQVDKLIQQATSVENLCQHYIGWCPFW) form the FATC domain.

Belongs to the PI3/PI4-kinase family. As to quaternary structure, the target of rapamycin complex 1 (TORC1) is composed of at least KOG1, LST8, TCO89 and either TOR1 (TORC1-A) or TOR2 (TORC1-B). TORC1 binds to and is inhibited by FKBP-rapamycin. Interacts with PIB2; following activation of PIB2 by glutamine. The target of rapamycin complex 2 (TORC2) is composed of at least AVO1, AVO2, BIT61, LST8, TOR2 and TSC11. TORC2 forms a homodimer. Contrary to TORC1, TORC2 does not bind to and is not sensitive to FKBP-rapamycin. Interacts with SLM1 and SLM2.

The protein resides in the cell membrane. It localises to the vacuole membrane. The catalysed reaction is L-seryl-[protein] + ATP = O-phospho-L-seryl-[protein] + ADP + H(+). It carries out the reaction L-threonyl-[protein] + ATP = O-phospho-L-threonyl-[protein] + ADP + H(+). The enzyme catalyses a 1,2-diacyl-sn-glycero-3-phospho-(1D-myo-inositol) + ATP = a 1,2-diacyl-sn-glycero-3-phospho-(1D-myo-inositol 4-phosphate) + ADP + H(+). In terms of biological role, phosphatidylinositol 3-kinase homolog, component of both TORC1 and TORC2. TORC1 regulates multiple cellular processes to control cell growth in response to environmental signals. Nutrient limitation and environmental stress signals cause inactivation of TORC1. Active TORC1 positively controls ribosome biogenesis via control of rRNA, ribosomal protein and tRNA gene expression, and rRNA processing. TORC1 positively controls protein biosynthesis by regulation of mRNA stability, translation initiation factor activity, and high-affinity amino acid permeases that serve to provide amino acids for use by the translation machinery. TORC1 also promotes growth by sequestering a number of nutrient and general stress-responsive transcription factors in the cytoplasm. TORC1 negatively controls macroautophagy, a process to recycle surplus cytoplasmic mass under nutrient starvation conditions. TORC1 controls many of these processes via TIP41-TAP42-mediated inhibition of the type 2A-related phosphatases PP2A and SIT4. In nutrient-rich conditions, responsible for the phosphorylation of AGC S6 kinase (S6K) YPK3, activating YPK3 kinase activity and promoting phosphorylation of ribosomal protein S6. Phosphorylates kinase SCH9 at 6 amino acids in the C-terminus, activating SCH9 kinase activity to properly regulate ribosome biogenesis, translation initiation, and entry into stationary phase. TORC2 regulates cell cycle-dependent polarization of the actin-cytoskeleton, cell wall integrity, and receptor endocytosis. TORC2 controls polarity of the actin cytoskeleton, which is required for orienting the secretory pathway toward discrete growth sites, via the RHO1/PKC1/MAPK cell integrity pathway by activating the RHO1 guanine nucleotide exchange factor ROM2. TORC2 phosphorylates the AGC kinase YPK2, an upstream effector of the cell integrity pathway. TORC2 negatively regulates calcineurin-dependent stress signaling via phosphorylation of its effector SLM1-SLM2. The protein is Serine/threonine-protein kinase TOR2 (TOR2) of Saccharomyces cerevisiae (strain ATCC 204508 / S288c) (Baker's yeast).